Here is a 590-residue protein sequence, read N- to C-terminus: Methionine--tRNA ligase, mitochondrial (590 aa).

The transit peptide at 1-26 (MRTRFLFLTSGCKAVPELHKIVLANA) directs the protein to the mitochondrion. Positions 51–61 (FYVNASPHLGH) match the 'HIGH' region motif. Positions 342-346 (KMSKS) match the 'KMSKS' region motif. An ATP-binding site is contributed by lysine 345. The tract at residues 570-590 (LESQRADQQKNRKMEKGSNLK) is disordered. Residues 571-590 (ESQRADQQKNRKMEKGSNLK) are compositionally biased toward basic and acidic residues.

The protein belongs to the class-I aminoacyl-tRNA synthetase family.

It localises to the mitochondrion matrix. It carries out the reaction tRNA(Met) + L-methionine + ATP = L-methionyl-tRNA(Met) + AMP + diphosphate. The polypeptide is Methionine--tRNA ligase, mitochondrial (mars2) (Takifugu rubripes (Japanese pufferfish)).